A 449-amino-acid chain; its full sequence is Aminopeptidase C (449 aa).

Residues Cys70, His364, and Asn385 contribute to the active site.

This sequence belongs to the peptidase C1 family. In terms of assembly, homohexamer.

The protein localises to the cytoplasm. It catalyses the reaction Inactivates bleomycin B2 (a cytotoxic glycometallopeptide) by hydrolysis of a carboxyamide bond of beta-aminoalanine, but also shows general aminopeptidase activity. The specificity varies somewhat with source, but amino acid arylamides of Met, Leu and Ala are preferred.. This chain is Aminopeptidase C (pepC), found in Lactobacillus delbrueckii subsp. lactis.